The sequence spans 150 residues: MIKTLIIIIVSVIVGYLISHFNILNFVISSLIEVTVINNKKVIVGAIVGQALIYFFVFFLPLSSVANQIVKEESSTNYRVNPPKTPSLVGNLYLQQQLQQQQQQQQQLQQQQQQQQQSHHQPILNTATPFTLQNHLIPNPSIKTTQYNIK.

2 helical membrane passes run 4-24 (TLIIIIVSVIVGYLISHFNIL) and 42-62 (VIVGAIVGQALIYFFVFFLPL).

The protein resides in the membrane. This is Putative transmembrane protein DDB_G0277665 from Dictyostelium discoideum (Social amoeba).